A 273-amino-acid polypeptide reads, in one-letter code: Large ribosomal subunit protein uL2 (273 aa).

Positions 221-263 (RGTAMNPVDHPHGGGEGRNFGKHPVTPWGVQTKGKKTRHNKRT) are disordered. Positions 253 to 263 (KGKKTRHNKRT) are enriched in basic residues.

It belongs to the universal ribosomal protein uL2 family. Part of the 50S ribosomal subunit. Forms a bridge to the 30S subunit in the 70S ribosome.

In terms of biological role, one of the primary rRNA binding proteins. Required for association of the 30S and 50S subunits to form the 70S ribosome, for tRNA binding and peptide bond formation. It has been suggested to have peptidyltransferase activity; this is somewhat controversial. Makes several contacts with the 16S rRNA in the 70S ribosome. The polypeptide is Large ribosomal subunit protein uL2 (Histophilus somni (strain 129Pt) (Haemophilus somnus)).